The chain runs to 690 residues: Xylosyl- and glucuronyltransferase LARGE2 (690 aa).

Residues 1–7 (MLPRGRP) are Cytoplasmic-facing. Residues 8-28 (RALGAALLLLLLLVVGFFLFG) form a helical; Signal-anchor for type II membrane protein membrane-spanning segment. At 29-690 (RDPEYGLGTT…TALQQSRSRA (662 aa)) the chain is on the lumenal side. N-linked (GlcNAc...) asparagine glycosylation is found at Asn-50 and Asn-77. The tract at residues 67-342 (LHVAIVCAGY…FLGFDGKLLC (276 aa)) is xylosyltransferase activity. Mn(2+) contacts are provided by Asp-171 and Asp-173. Asn-201 is a glycosylation site (N-linked (GlcNAc...) asparagine). The glucuronyltransferase activity stretch occupies residues 343–686 (RELFGCPNQF…LKYLTALQQS (344 aa)). Residues Asp-491 and Asp-493 each contribute to the Mn(2+) site.

This sequence in the C-terminal section; belongs to the glycosyltransferase 49 family. The protein in the N-terminal section; belongs to the glycosyltransferase 8 family. Interacts with B4GAT1. It depends on Mn(2+) as a cofactor.

It is found in the golgi apparatus membrane. It catalyses the reaction 3-O-[beta-D-GlcA-(1-&gt;3)-beta-D-Xyl-(1-&gt;4)-Rib-ol-P-Rib-ol-P-3-beta-D-GalNAc-(1-&gt;3)-beta-D-GlcNAc-(1-&gt;4)-(O-6-P-alpha-D-Man)]-Thr-[protein] + UDP-alpha-D-xylose = 3-O-[alpha-D-Xyl-(1-&gt;3)-beta-D-GlcA-(1-&gt;4)-beta-D-Xyl-(1-&gt;4)-Rib-ol-P-Rib-ol-P-3-beta-D-GalNAc-(1-&gt;3)-beta-D-GlcNAc-(1-&gt;4)-(O-6-P-alpha-D-Man)]-Thr-[protein] + UDP + H(+). The enzyme catalyses 3-O-{(1-&gt;[3)-alpha-D-Xyl-(1-&gt;3)-beta-D-GlcA-(1-&gt;](n)-4)-beta-D-Xyl-(1-&gt;4)-Rib-ol-P-Rib-ol-P-3-beta-D-GalNAc-(1-&gt;3)-beta-D-GlcNAc-(1-&gt;4)-O-6-P-alpha-D-Man}-L-Thr-[protein] + UDP-alpha-D-glucuronate = 3-O-{beta-D-GlcA-(1-&gt;[3)-alpha-D-Xyl-(1-&gt;3)-beta-D-GlcA-(1-&gt;](n)-4)-beta-D-Xyl-(1-&gt;4)-Rib-ol-P-Rib-ol-P-3-beta-D-GalNAc-(1-&gt;3)-beta-D-GlcNAc-(1-&gt;4)-O-6-P-alpha-D-Man}-L-Thr-[protein] + UDP + H(+). The catalysed reaction is 3-O-{beta-D-GlcA-(1-&gt;[3)-alpha-D-Xyl-(1-&gt;3)-beta-D-GlcA-(1-&gt;](n)-4)-beta-D-Xyl-(1-&gt;4)-Rib-ol-P-Rib-ol-P-3-beta-D-GalNAc-(1-&gt;3)-beta-D-GlcNAc-(1-&gt;4)-O-6-P-alpha-D-Man}-L-Thr-[protein] + UDP-alpha-D-xylose = 3-O-{(1-&gt;[3)-alpha-D-Xyl-(1-&gt;3)-beta-D-GlcA-(1-&gt;](n+1)-4)-beta-D-Xyl-(1-&gt;4)-Rib-ol-P-Rib-ol-P-3-beta-D-GalNAc-(1-&gt;3)-beta-D-GlcNAc-(1-&gt;4)-O-6-P-alpha-D-Man}-L-Thr-[protein] + UDP + H(+). The protein operates within protein modification; protein glycosylation. Its function is as follows. Bifunctional glycosyltransferase with both alpha-1,3-xylosyltransferase and beta-1,3-glucuronyltransferase activities involved in the maturation of alpha-dystroglycan (DAG1) by glycosylation leading to DAG1 binding to laminin G-like domain-containing extracellular proteins with high affinity and in a phosphorylated-O-mannosyl trisaccharide dependent manner. Elongates the glucuronyl-beta-1,4-xylose-beta disaccharide primer structure by adding repeating units [-3-Xylose-alpha-1,3-GlcA-beta-1-] to produce a heteropolysaccharide. Supports the maturation of DAG1 more effectively than LARGE1. In addition, can modify both heparan sulfate (HS)- and chondroitin/dermatan sulfate (CS/DS)-proteoglycans (PGs), namely GPC4, with a glycosaminoglycan (GAG)-like polysaccharide composed of xylose and glucuronic acid to confer laminin binding. In Rattus norvegicus (Rat), this protein is Xylosyl- and glucuronyltransferase LARGE2.